The chain runs to 277 residues: MKTLKVVATPIGNIQEISERAKKALQDCEVLFCEDSRVTRKMLDLLNIDCKQKKFVINNSFKEKQNLTFAEEFITNFKCCLVSDAGYPSLSDPGNEMINWIISKNKEIRIEVINGPSALMCGLITSGFKTTPLLFLGFLSHKQNQLKNYLSTYQNQKSTIVFFEAVHRLENTLETVKNVFKNNDVFIGRELTKLHESHYWFNTSENTLPDITLKGEFVIVIDNQNINHQTLSSNQYLVYEIKKLMDIGVKLKDACNYLAKKMHLKSSMLYTLFHESI.

The protein belongs to the methyltransferase superfamily. RsmI family.

It is found in the cytoplasm. The catalysed reaction is cytidine(1402) in 16S rRNA + S-adenosyl-L-methionine = 2'-O-methylcytidine(1402) in 16S rRNA + S-adenosyl-L-homocysteine + H(+). Catalyzes the 2'-O-methylation of the ribose of cytidine 1402 (C1402) in 16S rRNA. The chain is Ribosomal RNA small subunit methyltransferase I from Mycoplasma genitalium (strain ATCC 33530 / DSM 19775 / NCTC 10195 / G37) (Mycoplasmoides genitalium).